The primary structure comprises 513 residues: Glycine/sarcosine/betaine reductase complex component C subunit beta (513 aa).

As to quaternary structure, heterooctamer of four alpha and four beta subunits. Component of the glycine, sarcosine and betaine reductase complexes, together with proteins A and B.

The catalysed reaction is acetyl phosphate + [thioredoxin]-disulfide + NH4(+) + H2O = [thioredoxin]-dithiol + glycine + phosphate + H(+). It carries out the reaction acetyl phosphate + methylamine + [thioredoxin]-disulfide + H2O = sarcosine + [thioredoxin]-dithiol + phosphate + H(+). The enzyme catalyses acetyl phosphate + trimethylamine + [thioredoxin]-disulfide + H2O = glycine betaine + [thioredoxin]-dithiol + phosphate + H(+). Functionally, in the first step of glycine, betaine and sarcosine reductases, the substrate is bound to component PB via a Schiff base intermediate. Then the PB-activated substrate is nucleophilically attacked by the selenol anion of component PA to transform it to a carboxymethylated selenoether and the respective amine. By action of component PC, acetyl phosphate is formed, leaving component PA in its oxidized state. Finally component PA becomes reduced by the thioredoxin system to start a new catalytic cycle of reductive deamination. This chain is Glycine/sarcosine/betaine reductase complex component C subunit beta (grdC), found in Peptoclostridium acidaminophilum (Eubacterium acidaminophilum).